Here is an 881-residue protein sequence, read N- to C-terminus: Alanine--tRNA ligase (881 aa).

4 residues coordinate Zn(2+): histidine 563, histidine 567, cysteine 672, and histidine 676.

It belongs to the class-II aminoacyl-tRNA synthetase family. Zn(2+) serves as cofactor.

It is found in the cytoplasm. It carries out the reaction tRNA(Ala) + L-alanine + ATP = L-alanyl-tRNA(Ala) + AMP + diphosphate. Its function is as follows. Catalyzes the attachment of alanine to tRNA(Ala) in a two-step reaction: alanine is first activated by ATP to form Ala-AMP and then transferred to the acceptor end of tRNA(Ala). Also edits incorrectly charged Ser-tRNA(Ala) and Gly-tRNA(Ala) via its editing domain. This chain is Alanine--tRNA ligase, found in Azorhizobium caulinodans (strain ATCC 43989 / DSM 5975 / JCM 20966 / LMG 6465 / NBRC 14845 / NCIMB 13405 / ORS 571).